We begin with the raw amino-acid sequence, 263 residues long: Endonuclease 8 (263 aa).

Pro-2 (schiff-base intermediate with DNA) is an active-site residue. Glu-3 functions as the Proton donor in the catalytic mechanism. Lys-53 acts as the Proton donor; for beta-elimination activity in catalysis. 3 residues coordinate DNA: Gln-70, Arg-125, and Asn-169. An FPG-type zinc finger spans residues 229 to 263 (KVFHRDGEACERCGGIIEKTTLSSRPFYWCPHCQK). Residue Arg-253 is the Proton donor; for delta-elimination activity of the active site.

It belongs to the FPG family. It depends on Zn(2+) as a cofactor.

It carries out the reaction 2'-deoxyribonucleotide-(2'-deoxyribose 5'-phosphate)-2'-deoxyribonucleotide-DNA = a 3'-end 2'-deoxyribonucleotide-(2,3-dehydro-2,3-deoxyribose 5'-phosphate)-DNA + a 5'-end 5'-phospho-2'-deoxyribonucleoside-DNA + H(+). Its function is as follows. Involved in base excision repair of DNA damaged by oxidation or by mutagenic agents. Acts as a DNA glycosylase that recognizes and removes damaged bases. Has a preference for oxidized pyrimidines, such as thymine glycol, 5,6-dihydrouracil and 5,6-dihydrothymine. Has AP (apurinic/apyrimidinic) lyase activity and introduces nicks in the DNA strand. Cleaves the DNA backbone by beta-delta elimination to generate a single-strand break at the site of the removed base with both 3'- and 5'-phosphates. This Salmonella paratyphi B (strain ATCC BAA-1250 / SPB7) protein is Endonuclease 8.